A 204-amino-acid polypeptide reads, in one-letter code: Recombination protein RecR (204 aa).

The C4-type zinc finger occupies 58–75 (CSVCQNITDLGVDPCHIC). The Toprim domain occupies 83–181 (SVICVVESPT…NVTRIARGIP (99 aa)).

Belongs to the RecR family.

Functionally, may play a role in DNA repair. It seems to be involved in an RecBC-independent recombinational process of DNA repair. It may act with RecF and RecO. This Chlorobaculum tepidum (strain ATCC 49652 / DSM 12025 / NBRC 103806 / TLS) (Chlorobium tepidum) protein is Recombination protein RecR.